The chain runs to 204 residues: Large ribosomal subunit protein uL22c (204 aa).

Belongs to the universal ribosomal protein uL22 family. As to quaternary structure, part of the 50S ribosomal subunit.

The protein localises to the plastid. The protein resides in the chloroplast. In terms of biological role, this protein binds specifically to 23S rRNA. The globular domain of the protein is located near the polypeptide exit tunnel on the outside of the subunit, while an extended beta-hairpin is found that lines the wall of the exit tunnel in the center of the 70S ribosome. This chain is Large ribosomal subunit protein uL22c (rpl22), found in Pisum sativum (Garden pea).